Here is a 73-residue protein sequence, read N- to C-terminus: MAFLKKSLFLVLFLGLVSLSICDEEKRQDEDDDDDDDEEKRGVFDIIKGAGKQLIARAMGKIAEKVGLNKDGN.

The signal sequence occupies residues 1-22 (MAFLKKSLFLVLFLGLVSLSIC). Positions 23 to 39 (DEEKRQDEDDDDDDDEE) are excised as a propeptide.

As to expression, expressed by the skin glands.

Its subcellular location is the secreted. Functionally, has antibacterial activity against Gram-negative bacteria E.coli ATCC 25922 (MIC=60 uM), K.pneumoniae ATCC 700603 (MIC=240 uM) and S.choleraesuis ATCC 14028 (MIC=240 uM) and against Gram-positive bacterium S.aureus ATCC 29313 (MIC=240 uM). Shows no hemolytic activity and no cytotoxicity. The sequence is that of Ocellatin-PT8 from Leptodactylus pustulatus (Ceara white-lipped frog).